The primary structure comprises 303 residues: Vesicle-trafficking protein SEC22c (303 aa).

Residues 1–183 (MSVIFFACVV…EPAPNFRMEP (183 aa)) lie on the Cytoplasmic side of the membrane. Residues 8-119 (CVVRVRDGLP…YAFLEFDSII (112 aa)) form the Longin domain. A helical transmembrane segment spans residues 184 to 204 (VTALGILSLILNIMCAALNLI). At 205–223 (RGVHLAEHSLQVAHEEIGN) the chain is on the lumenal side. The helical transmembrane segment at 224 to 244 (ILAFLVPFVACIFQCYLYLFY) threads the bilayer. The Cytoplasmic portion of the chain corresponds to 245 to 248 (SPAR). A helical transmembrane segment spans residues 249–269 (TMKVVLMLLFICLGNMYLHGL). Residue Arg-270 is a topological domain, lumenal. A helical membrane pass occupies residues 271–291 (NLWQILFHIGVAFLSSYQILT). The Cytoplasmic portion of the chain corresponds to 292 to 303 (RQLQEKQSDCGV).

It belongs to the synaptobrevin family. As to expression, ubiquitously expressed.

The protein resides in the endoplasmic reticulum membrane. Its function is as follows. May be involved in vesicle transport between the ER and the Golgi complex. The protein is Vesicle-trafficking protein SEC22c (SEC22C) of Homo sapiens (Human).